We begin with the raw amino-acid sequence, 370 residues long: D-alanine--D-alanine ligase (370 aa).

The 209-residue stretch at 144-352 folds into the ATP-grasp domain; sequence KKIFADAGIP…YGALIERLVD (209 aa). Position 177–232 (177–232) interacts with ATP; the sequence is EEVLTYPVFVKPANLGSSVGISKATNKTELIEAMTEAFLYDRRVVVEQGVVAREIE. The Mg(2+) site is built by D306, E319, and N321.

The protein belongs to the D-alanine--D-alanine ligase family. Mg(2+) is required as a cofactor. The cofactor is Mn(2+).

The protein localises to the cytoplasm. The catalysed reaction is 2 D-alanine + ATP = D-alanyl-D-alanine + ADP + phosphate + H(+). The protein operates within cell wall biogenesis; peptidoglycan biosynthesis. Its function is as follows. Cell wall formation. The protein is D-alanine--D-alanine ligase of Listeria innocua serovar 6a (strain ATCC BAA-680 / CLIP 11262).